A 916-amino-acid polypeptide reads, in one-letter code: Protein translocase subunit SecA (916 aa).

ATP is bound by residues Q87, 105–109 (GEGKT), and D507. Zn(2+) contacts are provided by C900, C902, C911, and H912.

This sequence belongs to the SecA family. As to quaternary structure, monomer and homodimer. Part of the essential Sec protein translocation apparatus which comprises SecA, SecYEG and auxiliary proteins SecDF-YajC and YidC. Zn(2+) is required as a cofactor.

Its subcellular location is the cell inner membrane. The protein resides in the cytoplasm. It carries out the reaction ATP + H2O + cellular proteinSide 1 = ADP + phosphate + cellular proteinSide 2.. In terms of biological role, part of the Sec protein translocase complex. Interacts with the SecYEG preprotein conducting channel. Has a central role in coupling the hydrolysis of ATP to the transfer of proteins into and across the cell membrane, serving both as a receptor for the preprotein-SecB complex and as an ATP-driven molecular motor driving the stepwise translocation of polypeptide chains across the membrane. The chain is Protein translocase subunit SecA from Neisseria meningitidis serogroup C / serotype 2a (strain ATCC 700532 / DSM 15464 / FAM18).